Reading from the N-terminus, the 309-residue chain is Homoserine kinase (309 aa).

91–101 is a binding site for ATP; the sequence is PIGSGLGSSAC.

Belongs to the GHMP kinase family. Homoserine kinase subfamily.

It localises to the cytoplasm. It catalyses the reaction L-homoserine + ATP = O-phospho-L-homoserine + ADP + H(+). It participates in amino-acid biosynthesis; L-threonine biosynthesis; L-threonine from L-aspartate: step 4/5. Its function is as follows. Catalyzes the ATP-dependent phosphorylation of L-homoserine to L-homoserine phosphate. This is Homoserine kinase from Salmonella agona (strain SL483).